A 94-amino-acid polypeptide reads, in one-letter code: RxLR effector protein PITG_15972 (94 aa).

The N-terminal stretch at 1 to 21 is a signal peptide; it reads MRAVYILAMACAATLQASSSA. A RxLR-dEER motif is present at residues 50–65; the sequence is RLLRVEDKEEETEEER.

Belongs to the RxLR effector family.

The protein resides in the secreted. Its subcellular location is the host cytoplasm. It is found in the host nucleus. Effector that enhances P.infestans colonization of Nicotiana benthamiana leaves. This Phytophthora infestans (strain T30-4) (Potato late blight agent) protein is RxLR effector protein PITG_15972.